The following is a 224-amino-acid chain: Thymidine kinase, cytosolic (224 aa).

Ser13 is modified (phosphoserine). ATP-binding positions include 26-33 (GPMFSGKS), 58-60 (DTR), and 98-101 (DEGQ). Residue Glu99 is the Proton acceptor of the active site. Phe129 serves as a coordination point for substrate. Zn(2+) is bound by residues Cys154 and Cys157. Substrate contacts are provided by residues 173-177 (VEVIG) and Tyr182. Residues Cys186 and Cys189 each contribute to the Zn(2+) site. Residues 203-205 (KEN) carry the KEN box motif.

This sequence belongs to the thymidine kinase family. Homotetramer. Tetramerization from dimerization is induced by ATP and increases catalytic efficiency due to a high affinity for thymidine. Tetramerization is inhibited by phosphorylation at Ser-13. Interacts (via the KEN box) with FZR1. Phosphorylated on Ser-13 in mitosis. Phosphorylation of Ser-13 by CDK1 during mitosis reduces homotetramerization and catalytic efficiency when DNA replication is complete and intracellular TK1 is still present at a high level. Post-translationally, polyubiquitinated. Postmitosis, ubiquitination leads to proteasomal degradation. The KEN box sequence located at the C-terminal region targets for degradation by the anaphase promoting complex (APC/C) activated and rate-limited by FZR1.

Its subcellular location is the cytoplasm. It catalyses the reaction thymidine + ATP = dTMP + ADP + H(+). Functionally, cell-cycle-regulated enzyme of importance in nucleotide metabolism. Catalyzes the first enzymatic step in the salvage pathway converting thymidine into thymidine monophosphate. Transcriptional regulation limits expression to the S phase of the cell cycle and transient expression coincides with the oscillation in the intracellular dTTP concentration. The polypeptide is Thymidine kinase, cytosolic (TK1) (Gallus gallus (Chicken)).